The following is a 475-amino-acid chain: uncharacterized protein (475 aa).

The protein to E.coli YihN.

This is an uncharacterized protein from Mycoplasma pneumoniae (strain ATCC 29342 / M129 / Subtype 1) (Mycoplasmoides pneumoniae).